The chain runs to 619 residues: Chaperone protein HscA homolog (619 aa).

It belongs to the heat shock protein 70 family.

Chaperone involved in the maturation of iron-sulfur cluster-containing proteins. Has a low intrinsic ATPase activity which is markedly stimulated by HscB. The protein is Chaperone protein HscA homolog of Haemophilus influenzae (strain 86-028NP).